Consider the following 407-residue polypeptide: Methylthioribose kinase (407 aa).

Residues asparagine 40, lysine 57, and 111 to 113 contribute to the ATP site; that span reads EDL. Aspartate 229 contributes to the substrate binding site. 246–248 contacts ATP; that stretch reads DAE. Residue arginine 344 coordinates substrate.

This sequence belongs to the methylthioribose kinase family. In terms of assembly, homodimer.

The enzyme catalyses 5-(methylsulfanyl)-D-ribose + ATP = 5-(methylsulfanyl)-alpha-D-ribose 1-phosphate + ADP + H(+). It functions in the pathway amino-acid biosynthesis; L-methionine biosynthesis via salvage pathway; S-methyl-5-thio-alpha-D-ribose 1-phosphate from S-methyl-5'-thioadenosine (hydrolase route): step 2/2. Catalyzes the phosphorylation of methylthioribose into methylthioribose-1-phosphate. The polypeptide is Methylthioribose kinase (Yersinia pseudotuberculosis serotype IB (strain PB1/+)).